The primary structure comprises 299 residues: ATP phosphoribosyltransferase (299 aa).

Belongs to the ATP phosphoribosyltransferase family. Long subfamily. Equilibrium between an active dimeric form, an inactive hexameric form and higher aggregates. Interconversion between the various forms is largely reversible and is influenced by the natural substrates and inhibitors of the enzyme. Requires Mg(2+) as cofactor.

The protein resides in the cytoplasm. It catalyses the reaction 1-(5-phospho-beta-D-ribosyl)-ATP + diphosphate = 5-phospho-alpha-D-ribose 1-diphosphate + ATP. Its pathway is amino-acid biosynthesis; L-histidine biosynthesis; L-histidine from 5-phospho-alpha-D-ribose 1-diphosphate: step 1/9. Feedback inhibited by histidine. Its function is as follows. Catalyzes the condensation of ATP and 5-phosphoribose 1-diphosphate to form N'-(5'-phosphoribosyl)-ATP (PR-ATP). Has a crucial role in the pathway because the rate of histidine biosynthesis seems to be controlled primarily by regulation of HisG enzymatic activity. The chain is ATP phosphoribosyltransferase from Yersinia pseudotuberculosis serotype O:1b (strain IP 31758).